A 319-amino-acid chain; its full sequence is Annexin A4 (319 aa).

Ala-2 carries the post-translational modification N-acetylalanine. At Thr-7 the chain carries Phosphothreonine. Position 12 is a phosphoserine (Ser-12). Annexin repeat units follow at residues Phe-14–Thr-85, Pro-86–Ala-157, Ala-169–Lys-241, and Asn-245–Gly-316. N6-acetyllysine occurs at positions 213, 293, and 300.

This sequence belongs to the annexin family. In terms of assembly, monomer. Binds to SFTPA1 in a Ca(2+)-dependent manner.

It localises to the zymogen granule membrane. May play a role in alveolar type II cells through interaction with the surfactant protein SFTPA1 (SP-A). The chain is Annexin A4 (ANXA4) from Bos taurus (Bovine).